We begin with the raw amino-acid sequence, 369 residues long: Variable large protein 7 (369 aa).

The N-terminal stretch at 1–26 is a signal peptide; it reads MRKRISAIINKLNISIIIMTVVLMIG. Cys-27 carries the N-palmitoyl cysteine lipid modification. A lipid anchor (S-diacylglycerol cysteine) is attached at Cys-27.

Belongs to the variable large protein (Vlp) family. Alpha subfamily.

The protein localises to the cell outer membrane. Its function is as follows. The Vlp and Vsp proteins are antigenically distinct proteins, only one vlp or vsp gene is transcriptionally active at any one time. Switching between these genes is a mechanism of host immune response evasion. This is Variable large protein 7 from Borrelia hermsii.